Consider the following 344-residue polypeptide: D-amino-acid oxidase (344 aa).

A11, S14, S49, G53, N55, and I167 together coordinate FAD. (R)-lactate-binding residues include Y229 and R290. Positions 229 and 290 each coordinate anthranilate. Residues R290, S321, G324, Y325, and Q326 each contribute to the FAD site.

Belongs to the DAMOX/DASOX family. The cofactor is FAD.

Its subcellular location is the peroxisome. It carries out the reaction a D-alpha-amino acid + O2 + H2O = a 2-oxocarboxylate + H2O2 + NH4(+). It catalyses the reaction D-alanine + O2 + H2O = pyruvate + H2O2 + NH4(+). Catalyzes the oxidative deamination of D-amino acids with broad substrate specificity. Enables the organism to utilize D-amino acids as a source of nutrients. Enables the organism to utilize D-alanine as a source of nitrogen. This chain is D-amino-acid oxidase, found in Komagataella phaffii (strain GS115 / ATCC 20864) (Yeast).